The chain runs to 292 residues: Ribosomal protein L11 methyltransferase (292 aa).

Positions 136, 159, 181, and 228 each coordinate S-adenosyl-L-methionine.

It belongs to the methyltransferase superfamily. PrmA family.

The protein localises to the cytoplasm. It catalyses the reaction L-lysyl-[protein] + 3 S-adenosyl-L-methionine = N(6),N(6),N(6)-trimethyl-L-lysyl-[protein] + 3 S-adenosyl-L-homocysteine + 3 H(+). In terms of biological role, methylates ribosomal protein L11. This is Ribosomal protein L11 methyltransferase from Rhizobium johnstonii (strain DSM 114642 / LMG 32736 / 3841) (Rhizobium leguminosarum bv. viciae).